The primary structure comprises 260 residues: UPF0294 protein plu0699 (260 aa).

This sequence belongs to the UPF0294 family.

The protein localises to the cytoplasm. The chain is UPF0294 protein plu0699 from Photorhabdus laumondii subsp. laumondii (strain DSM 15139 / CIP 105565 / TT01) (Photorhabdus luminescens subsp. laumondii).